The primary structure comprises 356 residues: HORMA domain-containing protein 1 (356 aa).

The region spanning 24-225 is the HORMA domain; it reads QQSLVLVKKL…TPFHSIKMNV (202 aa). Disordered stretches follow at residues 282-305 and 333-356; these read ETQE…PKMD and QLEF…SVPK. The segment covering 288–298 has biased composition (basic and acidic residues); it reads EQPHRHTKEDF. Basic residues predominate over residues 347 to 356; that stretch reads PKRRKVSVPK.

Its subcellular location is the nucleus. It localises to the chromosome. Functionally, plays a key role in meiotic progression by ensuring that sufficient numbers of processed DNA double-strand breaks (DSBs) are available for successful homology search, promoting synaptonemal-complex formation independently and playing key role in the male mid-pachytene checkpoint and the female meiotic prophase checkpoint. In Danio rerio (Zebrafish), this protein is HORMA domain-containing protein 1 (hormad1).